We begin with the raw amino-acid sequence, 94 residues long: DASH complex subunit dad2 (94 aa).

Positions 18–38 (KLRDSSNDMVQQIETLAAKLE) form a coiled coil. The interval 72–94 (VRIPPSTSNTNASATEQGDVEEV) is disordered. Polar residues predominate over residues 76-87 (PSTSNTNASATE).

This sequence belongs to the DASH complex DAD2 family. Component of the DASH complex consisting of ask1, dad1, dad2, dad3, dad4, dam1, duo1, dad5, spc19 and spc34, with a stoichiometry of one copy of each subunit per complex. Multiple DASH complexes oligomerize to form a ring that encircles spindle microtubules and organizes the rod-like NDC80 complexes of the outer kinetochore. DASH complex oligomerization strengthens microtubule attachments. On cytoplasmic microtubules, DASH complexes appear to form patches instead of rings.

The protein resides in the nucleus. It localises to the cytoplasm. It is found in the cytoskeleton. Its subcellular location is the spindle. The protein localises to the chromosome. The protein resides in the centromere. It localises to the kinetochore. Component of the DASH complex that connects microtubules with kinetochores and couples microtubule depolymerisation to chromosome movement; it is involved in retrieving kinetochores to the spindle poles before their re-orientation on the spindle in early mitosis and allows microtubule depolymerization to pull chromosomes apart and resist detachment during anaphase. Kinetochores, consisting of a centromere-associated inner segment and a microtubule-contacting outer segment, play a crucial role in chromosome segregation by mediating the physical connection between centromeric DNA and microtubules. Kinetochores also serve as an input point for the spindle assembly checkpoint, which delays anaphase until all chromosomes have bioriented on the mitotic spindle. The DASH complex mediates bipolar kinetochore-microtubule attachments and facilitates the formation of additional interactions between outer kinetochore components and spindle microtubules. During chromosome movement along the microtubule, it is required both for the sliding of kinetochores along the lateral side of the microtubule and also for microtubule end-on pulling on the kinetochore. Modulates cytoplasmic microtubule dynamics by tracking the plus-end of shortening microtubules and slowing their depolymerization. The chain is DASH complex subunit dad2 from Schizosaccharomyces pombe (strain 972 / ATCC 24843) (Fission yeast).